The primary structure comprises 138 residues: Histone H2B.3 (138 aa).

2 stretches are compositionally biased toward basic and acidic residues: residues Met-1 to Thr-18 and Glu-26 to Lys-38. Residues Met-1–Lys-46 form a disordered region. Residues Lys-7 and Lys-27 each carry the N6-acetyllysine modification. A Glycyl lysine isopeptide (Lys-Gly) (interchain with G-Cter in ubiquitin) cross-link involves residue Lys-134.

The protein belongs to the histone H2B family. The nucleosome is a histone octamer containing two molecules each of H2A, H2B, H3 and H4 assembled in one H3-H4 heterotetramer and two H2A-H2B heterodimers. The octamer wraps approximately 147 bp of DNA. Can be acetylated to form H2BK6ac and H2BK33ac. Post-translationally, monoubiquitinated to form H2BK143ub1; may give a specific tag for epigenetic transcriptional activation.

It localises to the nucleus. The protein resides in the chromosome. In terms of biological role, core component of nucleosome. Nucleosomes wrap and compact DNA into chromatin, limiting DNA accessibility to the cellular machineries which require DNA as a template. Histones thereby play a central role in transcription regulation, DNA repair, DNA replication and chromosomal stability. DNA accessibility is regulated via a complex set of post-translational modifications of histones, also called histone code, and nucleosome remodeling. This is Histone H2B.3 from Triticum aestivum (Wheat).